A 416-amino-acid polypeptide reads, in one-letter code: ABSCISIC ACID-INSENSITIVE 5-like protein 5 (416 aa).

The disordered stretch occupies residues 1–23 (MDGSMNLGNEPPGDGGGGGGLTR). Gly residues predominate over residues 13-22 (GDGGGGGGLT). 3 positions are modified to phosphoserine: Ser-26, Ser-45, and Ser-86. Position 135 is a phosphothreonine (Thr-135). Residues 300–326 (SEGIGKSNGDSSSLSPSPYMFNGGVRG) form a disordered region. The 64-residue stretch at 336–399 (VERRQRRMIK…KNQETEMRNL (64 aa)) folds into the bZIP domain. Positions 338–357 (RRQRRMIKNRESAARSRARK) are basic motif. A leucine-zipper region spans residues 364 to 385 (LEAEVAKLKEENDELQRKQARI). The interval 388 to 416 (MQKNQETEMRNLLQGGPKKKLRRTESGPW) is disordered.

Belongs to the bZIP family. ABI5 subfamily. In terms of assembly, DNA-binding heterodimer. Interacts with ARIA. In terms of processing, the activation by phosphorylation is induced by abscisic acid (ABA). Phosphorylated by SRK2C, SRK2D, SRK2E, SRK2F and SRK2I in vitro. In terms of tissue distribution, expressed in roots, leaves, flowers and siliques but not in seeds.

Its subcellular location is the nucleus. Its function is as follows. Involved in ABA and stress responses and acts as a positive component of glucose signal transduction. Functions as a transcriptional activator in the ABA-inducible expression of rd29B. Binds specifically to the ABA-responsive element (ABRE) of the rd29B gene promoter. This is ABSCISIC ACID-INSENSITIVE 5-like protein 5 (ABF2) from Arabidopsis thaliana (Mouse-ear cress).